The following is a 956-amino-acid chain: MLEELECGAPGARGAATAMDCKDRPAFPVKKLIQARLPFKRLNLVPKGKADDMSDDQGTSVQSKSPDLEASLDTLENNCHVGSDIDFRPKLVNGKGPLDNFLRNRIETSIGQSTVIIDLTEDSNEQPDSLVDHNKLNSEASPSREAINGQREDTGDQQGLLKAIQNDKLAFPGETLSDIPCKTEEEGVGCGGAGRRGDSQECSPRSCPELTSGPRMCPRKEQDSWSEAGGILFKGKVPMVVLQDILAVRPPQIKSLPATPQGKNMTPESEVLESFPEEDSVLSHSSLSSPSSTSSPEGPPAPPKQHSSTSPFPTSTPLRRITKKFVKGSTEKNKLRLQRDQERLGKQLKLRAEREEKEKLKEEAKRAKEEAKKKKEEEKELKEKERREKREKDEKEKAEKQRLKEERRKERQEALEAKLEEKRKKEEEKRLREEEKRIKAEKAEITRFFQKPKTPQAPKTLAGSCGKFAPFEIKEHMVLAPRRRTAFHPDLCSQLDQLLQQQSGEFSFLKDLKGRQPLRSGPTHVSTRNADIFNSDVVIVERGKGDGVPERRKFGRMKLLQFCENHRPAYWGTWNKKTALIRARDPWAQDTKLLDYEVDSDEEWEEEEPGESLSHSEGDDDDDMGEDEDEDDGFFVPHGYLSEDEGVTEECADPENHKVRQKLKAKEWDEFLAKGKRFRVLQPVKIGCVWAADRDCAGDDLKVLQQFAACFLETLPAQEEQTPKASKRERRDEQILAQLLPLLHGNVNGSKVIIREFQEHCRRGLLSNHTGSPRSPSTTYLHTPTPSEDAAIPSKSRLKRLISENSVYEKRPDFRMCWYVHPQVLQSFQQEHLPVPCQWSYVTSVPSAPKEDSGSVPSTGPSQGTPISLKRKSAGSMCITQFMKKRRHDGQIGAEDMDGFQADTEEEEEEEGDCMIVDVPDAAEVQAPCGAASGAGGGVGVDTGKATLTASPLGAS.

Residues 1-49 (MLEELECGAPGARGAATAMDCKDRPAFPVKKLIQARLPFKRLNLVPKGK) are binds to PCNA. The binds to CBX1 chromo shadow domain stretch occupies residues 1–314 (MLEELECGAP…QHSSTSPFPT (314 aa)). 2 disordered regions span residues 45–65 (VPKG…QSKS) and 122–155 (DSNE…EDTG). Over residues 56 to 65 (DQGTSVQSKS) the composition is skewed to polar residues. Phosphoserine is present on residues Ser-65, Ser-123, Ser-138, Ser-141, and Ser-143. Lys-182 is covalently cross-linked (Glycyl lysine isopeptide (Lys-Gly) (interchain with G-Cter in SUMO1); alternate). Lys-182 participates in a covalent cross-link: Glycyl lysine isopeptide (Lys-Gly) (interchain with G-Cter in SUMO2); alternate. Positions 188–222 (VGCGGAGRRGDSQECSPRSCPELTSGPRMCPRKEQ) are disordered. 2 positions are modified to phosphoserine: Ser-206 and Ser-224. Positions 233 to 246 (FKGKVPMVVLQDIL) match the PxVxL motif motif. 2 disordered regions span residues 250–432 (PPQI…KRLR) and 599–639 (DSDE…VPHG). Composition is skewed to low complexity over residues 282 to 296 (LSHS…TSSP) and 307 to 317 (SSTSPFPTSTP). Position 310 is a phosphoserine (Ser-310). Residues 329–432 (STEKNKLRLQ…RKKEEEKRLR (104 aa)) are compositionally biased toward basic and acidic residues. Composition is skewed to acidic residues over residues 599–610 (DSDEEWEEEEPG) and 618–633 (GDDD…EDDG). A necessary for homodimerization and competence for chromatin assembly region spans residues 642–678 (SEDEGVTEECADPENHKVRQKLKAKEWDEFLAKGKRF). A binds to p60 region spans residues 660–956 (RQKLKAKEWD…TLTASPLGAS (297 aa)). Residue Thr-722 is modified to Phosphothreonine. Residues 765–790 (LLSNHTGSPRSPSTTYLHTPTPSEDA) are disordered. Positions 767 to 786 (SNHTGSPRSPSTTYLHTPTP) are enriched in polar residues. Phosphoserine is present on residues Ser-772, Ser-775, and Ser-803. Disordered regions lie at residues 844 to 873 (SVPS…KRKS) and 933 to 956 (SGAG…LGAS). The segment covering 855–866 (SVPSTGPSQGTP) has biased composition (polar residues). Thr-865 carries the post-translational modification Phosphothreonine. A phosphoserine mark is found at Ser-868, Ser-873, and Ser-951.

This sequence belongs to the CHAF1A family. As to quaternary structure, homodimer. Part of the CAF-1 complex that contains RBBP4, CHAF1B and CHAF1A. CHAF1A binds directly to CHAF1B. Only minor amounts of RBBP4 are complexed with CHAF1A and CHAF1B in G1 phase. Interacts with PCNA; the interaction is direct. Interacts (via the PxVxL motif) with CBX5; the interaction is direct. Interacts with MBD1. Interacts with histones H3.1, H3.2 and H3.1t.

The protein resides in the nucleus. In terms of biological role, acts as a component of the histone chaperone complex chromatin assembly factor 1 (CAF-1), which assembles histone octamers onto DNA during replication and repair. CAF-1 performs the first step of the nucleosome assembly process, bringing newly synthesized histones H3 and H4 to replicating DNA; histones H2A/H2B can bind to this chromatin precursor subsequent to DNA replication to complete the histone octamer. It may play a role in heterochromatin maintenance in proliferating cells by bringing newly synthesized cbx proteins to heterochromatic DNA replication foci. This Homo sapiens (Human) protein is Chromatin assembly factor 1 subunit A.